Here is a 230-residue protein sequence, read N- to C-terminus: U2 small nuclear ribonucleoprotein A' (230 aa).

5 LRR repeats span residues 15 to 36, 48 to 69, 71 to 92, 93 to 114, and 115 to 136; these read SLRNNIFTNNSITKNMRLNADT, GDRELNLRGLQIPVIENLGVTE, HYTSLDLSDNEIRVMGGFPRLE, TLRTLLLSKNRITQINDVKNIA, and KLETLVLTQNGIATLGALESLK. In terms of domain architecture, LRRCT spans 149–187; it reads NPVQHVPRYRSYMISILPSLRMLDFQRVTQKERDEAEAM.

Belongs to the U2 small nuclear ribonucleoprotein A family. In terms of assembly, associated with the spliceosome.

It is found in the nucleus. In terms of biological role, involved in pre-mRNA splicing. The protein is U2 small nuclear ribonucleoprotein A' (LEA1) of Yarrowia lipolytica (strain CLIB 122 / E 150) (Yeast).